Consider the following 46-residue polypeptide: Viscotoxin-A2 (46 aa).

3 cysteine pairs are disulfide-bonded: Cys3/Cys40, Cys4/Cys32, and Cys16/Cys26.

This sequence belongs to the plant thionin (TC 1.C.44) family.

It is found in the secreted. Functionally, thionins are small plant proteins which are toxic to animal cells. They seem to exert their toxic effect at the level of the cell membrane. Their precise function is not known. The polypeptide is Viscotoxin-A2 (THI2.3) (Viscum album (European mistletoe)).